The primary structure comprises 244 residues: Lymphotoxin-beta (244 aa).

Residues 1 to 18 lie on the Cytoplasmic side of the membrane; sequence MGALGLEGRGGRLQGRGS. Residues 19 to 48 form a helical; Signal-anchor for type II membrane protein membrane-spanning segment; it reads LLLAVAGATSLVTLLLAVPITVLAVLALVP. Residues 49–244 lie on the Extracellular side of the membrane; that stretch reads QDQGGLVTDT…KTFFGAVMVG (196 aa). The region spanning 88–243 is the THD domain; it reads PAAHLIGAPL…GKTFFGAVMV (156 aa). N-linked (GlcNAc...) asparagine glycosylation occurs at asparagine 222.

The protein belongs to the tumor necrosis factor family. Heterotrimer of either two LTB and one LTA subunits or (less prevalent) two LTA and one LTB subunits.

It is found in the membrane. Its function is as follows. Cytokine that binds to LTBR/TNFRSF3. May play a specific role in immune response regulation. Provides the membrane anchor for the attachment of the heterotrimeric complex to the cell surface. The sequence is that of Lymphotoxin-beta (LTB) from Macaca mulatta (Rhesus macaque).